We begin with the raw amino-acid sequence, 272 residues long: Inositol monophosphatase (272 aa).

Residues Glu-71, Asp-90, Ile-92, and Asp-93 each coordinate Mg(2+). A substrate-binding site is contributed by Glu-71. Substrate contacts are provided by residues 92–95 (IDGT), 194–196 (GTA), Glu-213, and Asp-220. Residue Asp-220 participates in Mg(2+) binding.

This sequence belongs to the inositol monophosphatase superfamily. Mg(2+) is required as a cofactor.

Its subcellular location is the cytoplasm. The catalysed reaction is a myo-inositol phosphate + H2O = myo-inositol + phosphate. It catalyses the reaction alpha-D-galactose 1-phosphate + H2O = D-galactose + phosphate. It participates in polyol metabolism; myo-inositol biosynthesis; myo-inositol from D-glucose 6-phosphate: step 2/2. With respect to regulation, inhibited by Li(+), Ca(2+) and Mn(2+), but also by Mg(2+) at concentrations above 3 mM. In terms of biological role, responsible for the provision of inositol required for synthesis of phosphatidylinositol and polyphosphoinositides. Has broad substrate specificity and can use myo-inositol monophosphates, myo-inositol 1,3-diphosphate, myo-inositol 1,4-diphosphate, scyllo-inositol-phosphate, D-galactose 1-phosphate, glucose-1-phosphate, glucose-6-phosphate, fructose-1-phosphate, beta-glycerophosphate, and 2'-AMP as substrates. This Dictyostelium discoideum (Social amoeba) protein is Inositol monophosphatase (impa1).